A 393-amino-acid chain; its full sequence is Ubiquitin-like modifier-activating enzyme 5 (393 aa).

The ATP site is built by glycine 75, aspartate 96, lysine 119, asparagine 142, and asparagine 175. The Zn(2+) site is built by cysteine 217 and cysteine 220. The Glycyl thioester intermediate role is filled by cysteine 241. Zn(2+) is bound by residues cysteine 294 and cysteine 299.

This sequence belongs to the ubiquitin-activating E1 family. UBA5 subfamily.

E1-like enzyme which activates UFM1. The polypeptide is Ubiquitin-like modifier-activating enzyme 5 (Bombyx mori (Silk moth)).